A 255-amino-acid polypeptide reads, in one-letter code: Small ribosomal subunit protein uS2 (255 aa).

The segment at 233–255 (DFVAEEAASEESLEELAEIVEGK) is disordered.

The protein belongs to the universal ribosomal protein uS2 family.

This Lactococcus lactis subsp. lactis (strain IL1403) (Streptococcus lactis) protein is Small ribosomal subunit protein uS2 (rpsB).